A 32-amino-acid polypeptide reads, in one-letter code: U21-ctenitoxin-Co1a (32 aa).

3 cysteine pairs are disulfide-bonded: Cys3/Cys17, Cys10/Cys21, and Cys16/Cys30.

In terms of tissue distribution, expressed by the venom gland.

The protein localises to the secreted. Its function is as follows. Not toxic to mice by intracerebroventricular injection. In Ctenus ornatus (Brazilian spider), this protein is U21-ctenitoxin-Co1a.